A 419-amino-acid chain; its full sequence is Probable 3-isopropylmalate dehydratase large subunit (419 aa).

The [4Fe-4S] cluster site is built by cysteine 299, cysteine 359, and cysteine 362.

Belongs to the aconitase/IPM isomerase family. LeuC type 2 subfamily. As to quaternary structure, heterodimer of LeuC and LeuD. Requires [4Fe-4S] cluster as cofactor.

It carries out the reaction (2R,3S)-3-isopropylmalate = (2S)-2-isopropylmalate. Its pathway is amino-acid biosynthesis; L-leucine biosynthesis; L-leucine from 3-methyl-2-oxobutanoate: step 2/4. In terms of biological role, catalyzes the isomerization between 2-isopropylmalate and 3-isopropylmalate, via the formation of 2-isopropylmaleate. This chain is Probable 3-isopropylmalate dehydratase large subunit, found in Methanothermobacter thermautotrophicus (strain ATCC 29096 / DSM 1053 / JCM 10044 / NBRC 100330 / Delta H) (Methanobacterium thermoautotrophicum).